The sequence spans 774 residues: Neprilysin-2 (774 aa).

Residues 1–20 (MQTVIQNPNWWRRRNKLEKS) are Cytoplasmic-facing. A helical; Signal-anchor for type II membrane protein transmembrane segment spans residues 21–41 (LLVSLGIMFVVLATGFGLWIG). The Extracellular portion of the chain corresponds to 42–774 (KVLRTSPPSN…MNPVQKCEVW (733 aa)). The tract at residues 50 to 79 (SNPQATALHGDSTTINQVPTGTASKGKSGD) is disordered. Residues 60–74 (DSTTINQVPTGTASK) show a composition bias toward polar residues. The Peptidase M13 domain occupies 83-774 (VCLTQECIHT…MNPVQKCEVW (692 aa)). Cystine bridges form between cysteine 84–cysteine 89, cysteine 107–cysteine 759, cysteine 115–cysteine 719, cysteine 171–cysteine 424, and cysteine 646–cysteine 771. Residues asparagine 173, asparagine 239, asparagine 264, asparagine 305, asparagine 315, asparagine 358, and asparagine 554 are each glycosylated (N-linked (GlcNAc...) asparagine). Histidine 609 is a binding site for Zn(2+). Residue glutamate 610 is part of the active site. Histidine 613 provides a ligand contact to Zn(2+). A glycan (N-linked (GlcNAc...) asparagine) is linked at asparagine 653. Glutamate 671 serves as a coordination point for Zn(2+). Catalysis depends on aspartate 675, which acts as the Proton donor.

This sequence belongs to the peptidase M13 family. Zn(2+) serves as cofactor. N-glycosylated. Post-translationally, the soluble form is probably produced by proteolytic cleavage. As to expression, detected in the stellate cells in the main segment and the bar-shaped cells in the initial segment of male and female Malpighian tubules (at protein level). Expressed in the spermatheca (at protein level). Expressed in the somatic cyst cells of the testes, with increased expression at the tail end of elongating cysts. Expressed in the ovaries with strong expression in the posterior polar cells and in border cells of stage 8, 9, and 10 follicles. In adults and third-instar larvae, expressed in the brain, ventral ganglion, and stellate cells. Also expressed in the foregut and the imaginal disks (eye, antennal and leg) of third-instar larvae. In stage 17 embryos, expressed in the tracheal system, foregut, hindgut and epidermis. Also expressed in the stellate cell progenitors of the caudal visceral mesoderm in embryos.

It is found in the cell membrane. Its subcellular location is the secreted. It carries out the reaction Preferential cleavage of polypeptides between hydrophobic residues, particularly with Phe or Tyr at P1'.. Its function is as follows. Metalloendoprotease which cleaves peptides such as tachykinin peptide TK-2 at the amino side of hydrophobic residues. Functions in female fertility, embryogenesis and memory formation. Required in females for normal patterns of egg laying, probably due to its function in sperm retention and preventing sperm displacement by rival ejaculates. Also required for normal patterns of hatching due to its important role in early embryonic development. Required in the dorsal paired medial neurons for the proper formation of middle-term memory. Also required in the mushroom body neurons where it functions redundantly with neprilysins Nep3 and Nep4 in normal long-term memory formation. This Drosophila melanogaster (Fruit fly) protein is Neprilysin-2.